A 142-amino-acid chain; its full sequence is Large ribosomal subunit protein uL13 (142 aa).

Belongs to the universal ribosomal protein uL13 family. Part of the 50S ribosomal subunit.

Its function is as follows. This protein is one of the early assembly proteins of the 50S ribosomal subunit, although it is not seen to bind rRNA by itself. It is important during the early stages of 50S assembly. The chain is Large ribosomal subunit protein uL13 from Shewanella frigidimarina (strain NCIMB 400).